The primary structure comprises 184 residues: MEDIEKIKPYVRSFSKALDELKPEIEKLTSKSLDEQLLLLSDERAKLELINRYAYVLSSLMFANMKVLGVKDMSPILGELKRVKSYMDKAKQYDNRITKSNEKSQAEQEKAKNIISNVLDGNKNQFEPSISRSNFQGKHTKFENDELAESTTTKIIDSTDHIRKASSKKSKRLDKVGKKKGGKK.

The disordered stretch occupies residues 157–184 (DSTDHIRKASSKKSKRLDKVGKKKGGKK). Residues 164–184 (KASSKKSKRLDKVGKKKGGKK) are compositionally biased toward basic residues.

This sequence belongs to the C1D family. In terms of assembly, associates with nuclear form of the RNA exosome complex. Interacts with RRP4, RRP6, RRP45 and RRP46.

Its subcellular location is the nucleus. Its function is as follows. Required for exosome-dependent processing of pre-rRNA and small nucleolar RNA (snRNA) precursors. Involved in processing of 35S pre-rRNA at the A0, A1 and A2 sites. Required for activity of RRP6 in 7S pre-rRNA processing. Also has a role in 3'-processing of U4 and U5 small nuclear RNAs (snRNAs). Acts as a mRNA export factor. Mediates mRNA degradation upon UV irradiation. Maintains genome integrity where it is involved in both non-homologous end joining (NHEJ) and homologous recombination pathway repair of double strand DNA breaks. During NHEJ, required for joining 3'-overhanging ends. Also involved in telomere length regulation and maintenance. The protein is Exosome complex protein LRP1 (LRP1) of Saccharomyces cerevisiae (strain ATCC 204508 / S288c) (Baker's yeast).